The primary structure comprises 317 residues: Peroxidase 64 (317 aa).

Residues methionine 1 to alanine 22 form the signal peptide. Disulfide bonds link cysteine 32/cysteine 111, cysteine 65/cysteine 70, cysteine 117/cysteine 313, and cysteine 195/cysteine 227. Histidine 63 serves as the catalytic Proton acceptor. Ca(2+)-binding residues include aspartate 64, valine 67, glycine 69, aspartate 71, and serine 73. Proline 158 lines the substrate pocket. Asparagine 163 carries N-linked (GlcNAc...) asparagine glycosylation. Histidine 188 contributes to the heme b binding site. Residue threonine 189 participates in Ca(2+) binding. Ca(2+)-binding residues include aspartate 241, threonine 243, and aspartate 248.

This sequence belongs to the peroxidase family. Classical plant (class III) peroxidase subfamily. Heme b is required as a cofactor. Ca(2+) serves as cofactor. As to expression, expressed in the whole plant, but preferentially in roots.

The protein localises to the secreted. It catalyses the reaction 2 a phenolic donor + H2O2 = 2 a phenolic radical donor + 2 H2O. Its function is as follows. Removal of H(2)O(2), oxidation of toxic reductants, biosynthesis and degradation of lignin, suberization, auxin catabolism, response to environmental stresses such as wounding, pathogen attack and oxidative stress. These functions might be dependent on each isozyme/isoform in each plant tissue. This chain is Peroxidase 64 (PER64), found in Arabidopsis thaliana (Mouse-ear cress).